A 554-amino-acid polypeptide reads, in one-letter code: Glypican-1 (554 aa).

A signal peptide spans 1–21 (MERLCWGWWWHLGILCLMHWA). Disulfide bonds link cysteine 32–cysteine 68, cysteine 62–cysteine 256, cysteine 69–cysteine 259, cysteine 191–cysteine 343, cysteine 246–cysteine 279, cysteine 268–cysteine 415, and cysteine 272–cysteine 401. Residues asparagine 79 and asparagine 116 are each glycosylated (N-linked (GlcNAc...) asparagine). A disordered region spans residues 346–369 (PKKTNKGSKSEERRRKGKATQEDK). Positions 353 to 369 (SKSEERRRKGKATQEDK) are enriched in basic and acidic residues. O-linked (Xyl...) (heparan sulfate) serine glycans are attached at residues serine 486, serine 488, and serine 490.

Belongs to the glypican family. O-glycosylated with heparan sulfate side chains.

It localises to the cell membrane. The protein resides in the secreted. It is found in the extracellular space. Functionally, cell surface proteoglycan that bears heparan sulfate. This Xenopus tropicalis (Western clawed frog) protein is Glypican-1 (gpc1).